The following is a 179-amino-acid chain: Large ribosomal subunit protein uL5 (179 aa).

Belongs to the universal ribosomal protein uL5 family. Part of the 50S ribosomal subunit; part of the 5S rRNA/L5/L18/L25 subcomplex. Contacts the 5S rRNA and the P site tRNA. Forms a bridge to the 30S subunit in the 70S ribosome.

In terms of biological role, this is one of the proteins that bind and probably mediate the attachment of the 5S RNA into the large ribosomal subunit, where it forms part of the central protuberance. In the 70S ribosome it contacts protein S13 of the 30S subunit (bridge B1b), connecting the 2 subunits; this bridge is implicated in subunit movement. Contacts the P site tRNA; the 5S rRNA and some of its associated proteins might help stabilize positioning of ribosome-bound tRNAs. The sequence is that of Large ribosomal subunit protein uL5 from Burkholderia multivorans (strain ATCC 17616 / 249).